Reading from the N-terminus, the 393-residue chain is Zinc-regulated GTPase metalloprotein activator 1 (393 aa).

Residues 16 to 23 (EDCPELVP) carry the psi-PxLVp motif motif. 47–54 (GYLGAGKT) provides a ligand contact to GTP. Zn(2+) contacts are provided by C105, C107, and C108. Positions 105-108 (CLCC) match the CXCC motif motif. Residues 108 to 112 (CSVKD) and 201 to 204 (NKTD) contribute to the GTP site. In terms of domain architecture, CobW C-terminal spans 271–374 (IVTVTFEVPG…VLQQLFLTAV (104 aa)).

The protein belongs to the SIMIBI class G3E GTPase family. ZNG1 subfamily. As to expression, present at high level in the nuclei of the ureteric bud cells in the developing kidneys.

Its subcellular location is the nucleus. It carries out the reaction GTP + H2O = GDP + phosphate + H(+). Its function is as follows. Zinc chaperone that directly transfers zinc cofactor to target metalloproteins, thereby activating them. Catalyzes zinc insertion into the active site of methionine aminopeptidase METAP1, which function to cleave the initiator methionine from polypeptides during or after protein translation. Mechanistically, the N-terminal psi-PxLVp motif binds to the C6H2-type zinc finger of inactive form of METAP1. After formation of the docked complex, zinc is transferred from the CXCC motif in the GTPase domain of ZNG1 to the zinc binding site in the peptidase domain of METAP1 in a process requiring GTP hydrolysis. GTP/GDP exchange is required for release of active METAP1. This is Zinc-regulated GTPase metalloprotein activator 1 (Zng1) from Mus musculus (Mouse).